A 259-amino-acid polypeptide reads, in one-letter code: MIRQPFHLVEYSPWPLTSSIGAFTLAIGLASWFHNHGFLCLTLAAFLIIVSMIQWWRDVVREGTYMGHHTSLVTTGLRWGMILFITSEVMFFLAFFWAFFHSSLSPTPEIGCSWPPTGIHPLNPFSVPLLNTAVLLASGVTVTWAHHSLMSGKRIDATQALILTVCLGAYFTFLQAGEYMAAPFSIADSVYGTTFFVATGFHGLHVLIGSSFLAICLARTWSHHFSAGHHFGFEAAAWYWHFVDVVWICLYLCIYWWGS.

7 consecutive transmembrane segments (helical) span residues 13–33, 36–56, 80–100, 125–145, 160–180, 195–215, and 237–257; these read PWPLTSSIGAFTLAIGLASWF, HGFLCLTLAAFLIIVSMIQWW, GMILFITSEVMFFLAFFWAFF, FSVPLLNTAVLLASGVTVTWA, ALILTVCLGAYFTFLQAGEYM, FFVATGFHGLHVLIGSSFLAI, and AWYWHFVDVVWICLYLCIYWW.

The protein belongs to the cytochrome c oxidase subunit 3 family. Component of the cytochrome c oxidase (complex IV, CIV), a multisubunit enzyme composed of a catalytic core of 3 subunits and several supernumerary subunits. The complex exists as a monomer or a dimer and forms supercomplexes (SCs) in the inner mitochondrial membrane with ubiquinol-cytochrome c oxidoreductase (cytochrome b-c1 complex, complex III, CIII).

The protein localises to the mitochondrion inner membrane. The enzyme catalyses 4 Fe(II)-[cytochrome c] + O2 + 8 H(+)(in) = 4 Fe(III)-[cytochrome c] + 2 H2O + 4 H(+)(out). Component of the cytochrome c oxidase, the last enzyme in the mitochondrial electron transport chain which drives oxidative phosphorylation. The respiratory chain contains 3 multisubunit complexes succinate dehydrogenase (complex II, CII), ubiquinol-cytochrome c oxidoreductase (cytochrome b-c1 complex, complex III, CIII) and cytochrome c oxidase (complex IV, CIV), that cooperate to transfer electrons derived from NADH and succinate to molecular oxygen, creating an electrochemical gradient over the inner membrane that drives transmembrane transport and the ATP synthase. Cytochrome c oxidase is the component of the respiratory chain that catalyzes the reduction of oxygen to water. Electrons originating from reduced cytochrome c in the intermembrane space (IMS) are transferred via the dinuclear copper A center (CU(A)) of subunit 2 and heme A of subunit 1 to the active site in subunit 1, a binuclear center (BNC) formed by heme A3 and copper B (CU(B)). The BNC reduces molecular oxygen to 2 water molecules using 4 electrons from cytochrome c in the IMS and 4 protons from the mitochondrial matrix. This chain is Cytochrome c oxidase subunit 3 (COIII), found in Lumbricus terrestris (Common earthworm).